Consider the following 498-residue polypeptide: Hyaluronan-mediated motility receptor (498 aa).

The required for interaction with FAM83D stretch occupies residues 150–331 (EEMTSERNVF…ITDLQNQLRQ (182 aa)). 2 N-linked (GlcNAc...) asparagine glycosylation sites follow: Asn-262 and Asn-302. Hyaluronic acid-binding regions lie at residues 420 to 430 (KQKIKHVVKLK) and 442 to 451 (KLRSQLAKRK). N-linked (GlcNAc...) asparagine glycosylation occurs at Asn-483. The residue at position 488 (Thr-488) is a Phosphothreonine.

As to quaternary structure, interacts with ANKRD26. Interacts with DYNLL1. Interacts with FAM83D/CHICA.

It localises to the cell surface. The protein resides in the cytoplasm. Its subcellular location is the cytoskeleton. The protein localises to the spindle. In terms of biological role, receptor for hyaluronic acid (HA). Involved in cell motility. When hyaluronan binds to HMMR, the phosphorylation of a number of proteins, including the PTK2/FAK1 occurs. May also be involved in cellular transformation and metastasis formation, and in regulating extracellular-regulated kinase (ERK) activity. May act as a regulator of adipogenisis. The sequence is that of Hyaluronan-mediated motility receptor (Hmmr) from Rattus norvegicus (Rat).